The following is a 205-amino-acid chain: Fibrillarin-like rRNA/tRNA 2'-O-methyltransferase (205 aa).

Residues 60 to 61 (ST), 76 to 77 (EF), 101 to 102 (DA), and 121 to 124 (DIAQ) contribute to the S-adenosyl-L-methionine site.

This sequence belongs to the methyltransferase superfamily. Fibrillarin family. As to quaternary structure, interacts with nop5. Component of box C/D small ribonucleoprotein (sRNP) particles that contain rpl7ae, FlpA and nop5, plus a guide RNA.

Its function is as follows. Involved in pre-rRNA and tRNA processing. Utilizes the methyl donor S-adenosyl-L-methionine to catalyze the site-specific 2'-hydroxyl methylation of ribose moieties in rRNA and tRNA. Site specificity is provided by a guide RNA that base pairs with the substrate. Methylation occurs at a characteristic distance from the sequence involved in base pairing with the guide RNA. This chain is Fibrillarin-like rRNA/tRNA 2'-O-methyltransferase, found in Methanospirillum hungatei JF-1 (strain ATCC 27890 / DSM 864 / NBRC 100397 / JF-1).